The sequence spans 196 residues: MSDSLNAAALDQLFRTARTQNAFADTPVSQEVLRELYELVKWGPTAANSGPARFVFVTSADGKARLKPALSEGNAAKTLAAPVTVIVAHDEDFHEKLPYLFPHADAKSWFDGPREGRAESAFRNGSLQGAYLILAARALGLDAGPMSGFDNAKVDAAFFAGTPIKSNFLVNLGYGDPAGLFPRSPRLSFDEAARFE.

This sequence belongs to the nitroreductase family. HadB/RutE subfamily. FMN serves as cofactor.

This Xanthomonas oryzae pv. oryzae (strain MAFF 311018) protein is Putative NADH dehydrogenase/NAD(P)H nitroreductase XOO4023.